Here is a 151-residue protein sequence, read N- to C-terminus: S-ribosylhomocysteine lyase (151 aa).

His-54, His-58, and Cys-121 together coordinate Fe cation.

This sequence belongs to the LuxS family. Homodimer. It depends on Fe cation as a cofactor.

The enzyme catalyses S-(5-deoxy-D-ribos-5-yl)-L-homocysteine = (S)-4,5-dihydroxypentane-2,3-dione + L-homocysteine. Its function is as follows. Involved in the synthesis of autoinducer 2 (AI-2) which is secreted by bacteria and is used to communicate both the cell density and the metabolic potential of the environment. The regulation of gene expression in response to changes in cell density is called quorum sensing. Catalyzes the transformation of S-ribosylhomocysteine (RHC) to homocysteine (HC) and 4,5-dihydroxy-2,3-pentadione (DPD). The chain is S-ribosylhomocysteine lyase from Clostridium perfringens (strain ATCC 13124 / DSM 756 / JCM 1290 / NCIMB 6125 / NCTC 8237 / Type A).